The following is a 154-amino-acid chain: Ribosome maturation factor RimP (154 aa).

It belongs to the RimP family.

Its subcellular location is the cytoplasm. Its function is as follows. Required for maturation of 30S ribosomal subunits. This chain is Ribosome maturation factor RimP, found in Deinococcus deserti (strain DSM 17065 / CIP 109153 / LMG 22923 / VCD115).